A 580-amino-acid polypeptide reads, in one-letter code: Negative elongation factor B (580 aa).

N6-acetyllysine is present on K519. Residues 552-580 are disordered; sequence DHRKPSPTQAAETPALDLPLPSVPAPATL. S557 bears the Phosphoserine mark.

This sequence belongs to the NELF-B family. As to quaternary structure, the NELF complex is composed of NELFA, NELFB, NELFCD and NELFE; the N-terminus of NELFB binds to the NELFA:NELFCD subcomplex. Binds RNA which may help to stabilize the NELF complex on nucleic acid Interacts with the first BRCT repeat of BRCA1. Interacts with KIAA1191. Isoform 1 and isoform 2 interact with NELFA, NELFCD and NELFE. In terms of tissue distribution, isoform 1 is expressed in the kidney, liver, adipose and lung. Isoform 2 is widely expressed.

Its subcellular location is the nucleus. Its function is as follows. Essential component of the NELF complex, a complex that negatively regulates the elongation of transcription by RNA polymerase II (Pol II). The NELF complex, which acts via an association with the DSIF complex and causes transcriptional pausing, is counteracted by the P-TEFb kinase complex. May be able to induce chromatin unfolding. Essential for early embryogenesis; plays an important role in maintaining the undifferentiated state of embryonic stem cells (ESCs) by preventing unscheduled expression of developmental genes. Plays a key role in establishing the responsiveness of stem cells to developmental cues; facilitates plasticity and cell fate commitment in ESCs by establishing the appropriate expression level of signaling molecules. Supports the transcription of genes involved in energy metabolism in cardiomyocytes; facilitates the association of transcription initiation factors with the promoters of the metabolism-related genes. In Mus musculus (Mouse), this protein is Negative elongation factor B (Nelfb).